The sequence spans 1258 residues: Plasma membrane calcium-transporting ATPase 3 (1258 aa).

Positions 1–19 (MGDMANSSIEFHPKPQQQR) are enriched in polar residues. Positions 1–22 (MGDMANSSIEFHPKPQQQREVP) are disordered. Residues 1-97 (MGDMANSSIE…NFIPPKQPKT (97 aa)) are Cytoplasmic-facing. The residue at position 8 (serine 8) is a Phosphoserine. Residues 98-118 (FLQLVWEALQDVTLIILEVAA) traverse the membrane as a helical segment. Over 119 to 155 (IVSLGLSFYAPPGEESEACGNVSGGAEDEGEAEAGWI) the chain is Extracellular. Residues 156–176 (EGAAILLSVICVVLVTAFNDW) traverse the membrane as a helical segment. The Cytoplasmic segment spans residues 177-364 (SKEKQFRGLQ…KEKSVLQGKL (188 aa)). Disordered stretches follow at residues 298-328 (EEEK…GAVA) and 335-354 (KSAE…NVPK). 2 stretches are compositionally biased toward basic and acidic residues: residues 299–308 (EEKKDKKGKQ) and 342–354 (MEER…NVPK). The helical transmembrane segment at 365-384 (TKLAVQIGKAGLVMSAITVI) threads the bilayer. Topologically, residues 385–417 (ILVLYFVIETFVVDGRVWLAECTPVYVQYFVKF) are extracellular. A helical membrane pass occupies residues 418 to 435 (FIIGVTVLVVAVPEGLPL). Residues 436-849 (AVTISLAYSV…MWGRNVYDSI (414 aa)) lie on the Cytoplasmic side of the membrane. The 4-aspartylphosphate intermediate role is filled by aspartate 473. The Mg(2+) site is built by aspartate 794 and aspartate 798. A helical transmembrane segment spans residues 850–869 (SKFLQFQLTVNVVAVIVAFT). The Extracellular segment spans residues 870–879 (GACITQDSPL). The helical transmembrane segment at 880–900 (KAVQMLWVNLIMDTFASLALA) threads the bilayer. At 901-920 (TEPPTESLLLRKPYGRDKPL) the chain is on the cytoplasmic side. The chain crosses the membrane as a helical span at residues 921–943 (ISRTMMKNILGHAVYQLTIIFTL). Topologically, residues 944–961 (LFVGELFFDIDSGRNAPL) are extracellular. A helical membrane pass occupies residues 962–983 (HSPPSEHYTIIFNTFVMMQLFN). At 984-1002 (EINARKIHGERNVFDGIFS) the chain is on the cytoplasmic side. The chain crosses the membrane as a helical span at residues 1003 to 1024 (NPIFCTIVLGTFGIQIVIVQFG). Residues 1025 to 1034 (GKPFSCSPLS) lie on the Extracellular side of the membrane. A helical membrane pass occupies residues 1035 to 1056 (TEQWLWCLFVGVGELVWGQVIA). Topologically, residues 1057–1258 (TIPTSQLKCL…SPLHSMETSL (202 aa)) are cytoplasmic. Phosphothreonine is present on threonine 1079. The interval 1097-1114 (LRRGQILWFRGLNRIQTQ) is calmodulin-binding subdomain A. Threonine 1113 is subject to Phosphothreonine; by PKC. The segment at 1115-1124 (MEVVSTFKRS) is calmodulin-binding subdomain B. Residue serine 1126 is modified to Phosphoserine. Positions 1204 to 1258 (ENEERLRAPPPPPPNQNNNAIDSGIYLTTHATKSATSSAFSSRPGSPLHSMETSL) are disordered. The segment covering 1231-1245 (TTHATKSATSSAFSS) has biased composition (low complexity).

This sequence belongs to the cation transport ATPase (P-type) (TC 3.A.3) family. Type IIB subfamily. Interacts with PDZD11. Interacts (via N-terminus) with YWHAE. As to expression, expressed predominantly in brain and skeletal muscle. Expressed in the molecular layer of the cerebellar cortex, in particular in granule cells (at protein level). Expressed in aldosterone producing glomerulosa cells of adrenal glands (at protein level). Detected at low levels in various tissues including testis, stomach, small intestine, and large intestine. In terms of tissue distribution, most abundant form in brain and most other tissues. Most abundant form in skeletal muscle and is also found in brain and at low levels in testis and kidney.

It is found in the cell membrane. The protein resides in the presynaptic cell membrane. It catalyses the reaction Ca(2+)(in) + ATP + H2O = Ca(2+)(out) + ADP + phosphate + H(+). ATP-driven Ca(2+) ion pump involved in the maintenance of basal intracellular Ca(2+) levels at the presynaptic terminals. Uses ATP as an energy source to transport cytosolic Ca(2+) ions across the plasma membrane to the extracellular compartment. May counter-transport protons, but the mechanism and the stoichiometry of this Ca(2+)/H(+) exchange remains to be established. The chain is Plasma membrane calcium-transporting ATPase 3 (Atp2b3) from Rattus norvegicus (Rat).